The chain runs to 303 residues: Suppressor of silencing P0 (303 aa).

This sequence belongs to the polerovirus P0 protein family.

Functionally, suppressor of RNA-mediated gene silencing. The sequence is that of Suppressor of silencing P0 from Pea enation mosaic virus-1 (strain WSG) (PEMV-1).